A 218-amino-acid polypeptide reads, in one-letter code: Elongation factor Ts (218 aa).

Residues 82–85 (TDFV) are involved in Mg(2+) ion dislocation from EF-Tu.

Belongs to the EF-Ts family.

It localises to the cytoplasm. Its function is as follows. Associates with the EF-Tu.GDP complex and induces the exchange of GDP to GTP. It remains bound to the aminoacyl-tRNA.EF-Tu.GTP complex up to the GTP hydrolysis stage on the ribosome. This is Elongation factor Ts from Prochlorococcus marinus (strain MIT 9313).